A 282-amino-acid chain; its full sequence is Phosphatidylglycerol--prolipoprotein diacylglyceryl transferase (282 aa).

The next 4 helical transmembrane spans lie at 19 to 39 (IGPITIRWYGLLIATAVLIGV), 59 to 79 (LSIWLVIGAIPAARIYYVLFQ), 90 to 110 (IIAIWQGGIAIHGAIIGGTLA), and 120 to 140 (VPFWQLADLVAPSLILGQAIG). Arg-141 is a binding site for a 1,2-diacyl-sn-glycero-3-phospho-(1'-sn-glycerol). 3 helical membrane-spanning segments follow: residues 181 to 201 (TFLYESIWDLMVFALLITLFF), 212 to 232 (VGTLFMVYLATYSLGRLWIEG), and 245 to 265 (IAQVVSLTGITLGLAGLAWLY).

It belongs to the Lgt family.

The protein localises to the cell inner membrane. The catalysed reaction is L-cysteinyl-[prolipoprotein] + a 1,2-diacyl-sn-glycero-3-phospho-(1'-sn-glycerol) = an S-1,2-diacyl-sn-glyceryl-L-cysteinyl-[prolipoprotein] + sn-glycerol 1-phosphate + H(+). Its pathway is protein modification; lipoprotein biosynthesis (diacylglyceryl transfer). In terms of biological role, catalyzes the transfer of the diacylglyceryl group from phosphatidylglycerol to the sulfhydryl group of the N-terminal cysteine of a prolipoprotein, the first step in the formation of mature lipoproteins. The protein is Phosphatidylglycerol--prolipoprotein diacylglyceryl transferase of Trichormus variabilis (strain ATCC 29413 / PCC 7937) (Anabaena variabilis).